We begin with the raw amino-acid sequence, 299 residues long: Probable lipid kinase YegS (299 aa).

The region spanning 2–133 is the DAGKc domain; the sequence is ANFPDSLLIL…IDMARVNDKT (132 aa). ATP contacts are provided by residues Thr40, 66–72, and Thr95; that span reads GDGTINE. 3 residues coordinate Mg(2+): Leu215, Asp218, and Leu220. Glu271 functions as the Proton acceptor in the catalytic mechanism.

It belongs to the diacylglycerol/lipid kinase family. YegS lipid kinase subfamily. Mg(2+) serves as cofactor. The cofactor is Ca(2+).

It localises to the cytoplasm. Probably phosphorylates lipids; the in vivo substrate is unknown. The sequence is that of Probable lipid kinase YegS from Salmonella arizonae (strain ATCC BAA-731 / CDC346-86 / RSK2980).